The sequence spans 426 residues: Serine hydroxymethyltransferase (426 aa).

Residues L121 and 125–127 (GHL) each bind (6S)-5,6,7,8-tetrahydrofolate. At K230 the chain carries N6-(pyridoxal phosphate)lysine. 354 to 356 (SPF) contributes to the (6S)-5,6,7,8-tetrahydrofolate binding site.

The protein belongs to the SHMT family. Homodimer. It depends on pyridoxal 5'-phosphate as a cofactor.

It localises to the cytoplasm. It catalyses the reaction (6R)-5,10-methylene-5,6,7,8-tetrahydrofolate + glycine + H2O = (6S)-5,6,7,8-tetrahydrofolate + L-serine. Its pathway is one-carbon metabolism; tetrahydrofolate interconversion. The protein operates within amino-acid biosynthesis; glycine biosynthesis; glycine from L-serine: step 1/1. Its function is as follows. Catalyzes the reversible interconversion of serine and glycine with tetrahydrofolate (THF) serving as the one-carbon carrier. This reaction serves as the major source of one-carbon groups required for the biosynthesis of purines, thymidylate, methionine, and other important biomolecules. Also exhibits THF-independent aldolase activity toward beta-hydroxyamino acids, producing glycine and aldehydes, via a retro-aldol mechanism. In Gloeobacter violaceus (strain ATCC 29082 / PCC 7421), this protein is Serine hydroxymethyltransferase.